The sequence spans 147 residues: Hemoglobin subunit epsilon (147 aa).

Residues 3–147 form the Globin domain; sequence HFTPEEKCII…VAIALAHKYH (145 aa). A Phosphoserine modification is found at Ser51. Residues His64 and His93 each contribute to the heme b site.

Belongs to the globin family. Red blood cells.

Hemoglobin epsilon chain is a beta-type chain found in early embryos. This is Hemoglobin subunit epsilon (HBE1) from Oryctolagus cuniculus (Rabbit).